The following is an 85-amino-acid chain: Neutrophil elastase 2A (85 aa).

The Peptidase S1 domain maps to 1–85 (IVGGRAAEPH…VAQGVFSFVR (85 aa)). The active-site Charge relay system is the Ser-67.

This sequence belongs to the peptidase S1 family. Elastase subfamily.

May be involved in the degradation of connective tissue in chronic lung disease. This Equus caballus (Horse) protein is Neutrophil elastase 2A.